The chain runs to 85 residues: Small ribosomal subunit protein bS16 (85 aa).

Belongs to the bacterial ribosomal protein bS16 family.

In Clostridium kluyveri (strain NBRC 12016), this protein is Small ribosomal subunit protein bS16.